We begin with the raw amino-acid sequence, 861 residues long: E3 ubiquitin-protein ligase HECTD3 (861 aa).

Ala-2 bears the N-acetylalanine mark. At Ser-12 the chain carries Phosphoserine. Residues 219–397 form the DOC domain; sequence DEDLIHFLYD…TSLVRYPRLE (179 aa). Residues 512–857 form the HECT domain; that stretch reads YEKPLDYRWP…NCVAIDTDMS (346 aa). Residue Cys-823 is the Glycyl thioester intermediate of the active site.

In terms of assembly, interacts with TRIOBP. Interacts with STX8.

The protein resides in the cytoplasm. It is found in the perinuclear region. It carries out the reaction S-ubiquitinyl-[E2 ubiquitin-conjugating enzyme]-L-cysteine + [acceptor protein]-L-lysine = [E2 ubiquitin-conjugating enzyme]-L-cysteine + N(6)-ubiquitinyl-[acceptor protein]-L-lysine.. It participates in protein modification; protein ubiquitination. Functionally, E3 ubiquitin ligases accepts ubiquitin from an E2 ubiquitin-conjugating enzyme in the form of a thioester and then directly transfers the ubiquitin to targeted substrates. Mediates ubiquitination of TRIOBP and its subsequent proteasomal degradation, thus facilitating cell cycle progression by regulating the turn-over of TRIOBP. Mediates also ubiquitination of STX8. The sequence is that of E3 ubiquitin-protein ligase HECTD3 (HECTD3) from Homo sapiens (Human).